Reading from the N-terminus, the 89-residue chain is UPF0250 protein Bphyt_0500 (89 aa).

It belongs to the UPF0250 family.

The polypeptide is UPF0250 protein Bphyt_0500 (Paraburkholderia phytofirmans (strain DSM 17436 / LMG 22146 / PsJN) (Burkholderia phytofirmans)).